We begin with the raw amino-acid sequence, 390 residues long: Transcription factor bHLH76 (390 aa).

Positions 147 to 217 (NVSEDSQSSG…SEKQPSDSLK (71 aa)) are disordered. Over residues 207 to 217 (NSEKQPSDSLK) the composition is skewed to basic and acidic residues. A bHLH domain is found at 229–279 (QATNSHSLAERVRREKISERMKFLQDLVPGCDKVTGKAVMLDEIINYVQSL).

Homodimer. Interacts with IBH1. Binds reversibly to CRY2 after blue light illumination. As to expression, expressed constitutively in roots, leaves, stems, and flowers.

The protein localises to the nucleus. Its function is as follows. Transcriptional activator involved in cell elongation. Regulates the expression of a subset of genes involved in cell expansion by binding to the G-box motif. Binds to chromatin DNA of the FT gene and promotes its expression, and thus triggers flowering in response to blue light. The chain is Transcription factor bHLH76 (BHLH76) from Arabidopsis thaliana (Mouse-ear cress).